Consider the following 148-residue polypeptide: Small ribosomal subunit protein eS6 (148 aa).

This sequence belongs to the eukaryotic ribosomal protein eS6 family.

The sequence is that of Small ribosomal subunit protein eS6 from Pyrobaculum islandicum (strain DSM 4184 / JCM 9189 / GEO3).